The sequence spans 422 residues: MLDLEVVPERSLGNEQWEFTLGMPLAQAVAILQKHCRIIKNVQVLYSEQSPLSHDLILNLTQDGIKLLFDAFNQRLKVIEVYDLTKVKLKYCGVHFNSQAIAPTIEQIDQSFGATHPGVYNSAEQLFHLNFRGLSFSFQLDSWTEAPKYEPNFAHGLASLQIPHGATVKRMYIYSGNSLQDTKAPMMPLSCFLGNVYAESVDVIRDGTGPSGLRLRLLAAGCGPGVLADAKMRVFERAVYFGDSCQDVLSMLGSPHKVFYKSEDKMKIHSPSPHKQVPSKCNDYFFNYFTLGVDILFDANTHKVKKFVLHTNYPGHYNFNIYHRCEFKIPLAIKKENAGGQTEICTTYSKWDSIQELLGHPVEKPVVLHRSSSPNNTNPFGSTFCFGLQRMIFEVMQNNHIASVTLYGPPRPGAHLRTAELP.

Belongs to the PHAF1 family. Interacts with BCAS3; the interaction is requrired for the association with the phagophore.

It is found in the cytoplasm. The protein localises to the preautophagosomal structure. Functionally, plays a regulatory role in autophagic activity. In complex with BCAS3, associates with the autophagosome formation site during both non-selective and selective autophagy. The polypeptide is Phagosome assembly factor 1 (Phaf1) (Rattus norvegicus (Rat)).